Here is a 205-residue protein sequence, read N- to C-terminus: Glycerol-3-phosphate acyltransferase (205 aa).

5 helical membrane passes run L13–L33, L68–Y88, A90–F110, I120–A140, and Y147–G167.

Belongs to the PlsY family. In terms of assembly, probably interacts with PlsX.

The protein localises to the cell inner membrane. The catalysed reaction is an acyl phosphate + sn-glycerol 3-phosphate = a 1-acyl-sn-glycero-3-phosphate + phosphate. The protein operates within lipid metabolism; phospholipid metabolism. Functionally, catalyzes the transfer of an acyl group from acyl-phosphate (acyl-PO(4)) to glycerol-3-phosphate (G3P) to form lysophosphatidic acid (LPA). This enzyme utilizes acyl-phosphate as fatty acyl donor, but not acyl-CoA or acyl-ACP. The chain is Glycerol-3-phosphate acyltransferase from Agrobacterium fabrum (strain C58 / ATCC 33970) (Agrobacterium tumefaciens (strain C58)).